Consider the following 132-residue polypeptide: Transcription antitermination protein NusB (132 aa).

It belongs to the NusB family.

Functionally, involved in transcription antitermination. Required for transcription of ribosomal RNA (rRNA) genes. Binds specifically to the boxA antiterminator sequence of the ribosomal RNA (rrn) operons. The sequence is that of Transcription antitermination protein NusB from Campylobacter jejuni subsp. jejuni serotype O:6 (strain 81116 / NCTC 11828).